Consider the following 598-residue polypeptide: Elongation factor 4 (598 aa).

In terms of domain architecture, tr-type G spans 2 to 184 (QHIRNFSIIA…AIVARVPAPK (183 aa)). Residues 14–19 (DHGKST) and 131–134 (NKID) contribute to the GTP site.

The protein belongs to the TRAFAC class translation factor GTPase superfamily. Classic translation factor GTPase family. LepA subfamily.

The protein localises to the cell inner membrane. It catalyses the reaction GTP + H2O = GDP + phosphate + H(+). Its function is as follows. Required for accurate and efficient protein synthesis under certain stress conditions. May act as a fidelity factor of the translation reaction, by catalyzing a one-codon backward translocation of tRNAs on improperly translocated ribosomes. Back-translocation proceeds from a post-translocation (POST) complex to a pre-translocation (PRE) complex, thus giving elongation factor G a second chance to translocate the tRNAs correctly. Binds to ribosomes in a GTP-dependent manner. The sequence is that of Elongation factor 4 from Azoarcus sp. (strain BH72).